The primary structure comprises 656 residues: Membrane-associated tyrosine- and threonine-specific cdc2-inhibitory kinase wee-1.3 (656 aa).

Residues 1 to 11 (MDETENNTSID) are compositionally biased toward polar residues. The interval 1 to 24 (MDETENNTSIDSVEVGPSSPRVVA) is disordered. The 248-residue stretch at 107 to 354 (FQIDEIIGRG…SDALRKHLSI (248 aa)) folds into the Protein kinase domain. ATP-binding positions include 113–121 (IGRGSFGEV) and Lys-136. Catalysis depends on Asp-227, which acts as the Proton acceptor. Mg(2+) contacts are provided by Asn-232 and Asp-245. Disordered regions lie at residues 449 to 552 (PFDF…NSSI) and 617 to 656 (KGKE…GDEN). Residues 486 to 505 (ATCSSSNSSAIETAEDSLSS) are compositionally biased toward polar residues. Residues 617-631 (KGKEKPVVEPAELRQ) are compositionally biased toward basic and acidic residues. Polar residues predominate over residues 646–656 (ASFQGSSGDEN).

This sequence belongs to the protein kinase superfamily. Ser/Thr protein kinase family. WEE1 subfamily.

It localises to the golgi apparatus membrane. Its subcellular location is the cytoplasm. It catalyses the reaction L-seryl-[protein] + ATP = O-phospho-L-seryl-[protein] + ADP + H(+). The catalysed reaction is L-threonyl-[protein] + ATP = O-phospho-L-threonyl-[protein] + ADP + H(+). Functionally, acts as a negative regulator of entry into mitosis (G2 to M transition) by phosphorylation of the CDK1 kinase during oocyte maturation. Required for embryonic development, germline proliferation and initiation of meiosis during spermatogenesis. Required for chromosome structure during mitosis and negative regulation of nuclear envelope breakdown. The sequence is that of Membrane-associated tyrosine- and threonine-specific cdc2-inhibitory kinase wee-1.3 from Caenorhabditis briggsae.